The following is a 166-amino-acid chain: Lithostathine-1-beta (166 aa).

The first 22 residues, 1–22 (MAQTNSFFMLISSLMFLSLSQG), serve as a signal peptide directing secretion. A glycan (O-linked (GalNAc...) threonine) is linked at Thr-27. One can recognise a C-type lectin domain in the interval 34–164 (ISCPEGTNAY…EKKFSFVCKF (131 aa)). 3 cysteine pairs are disulfide-bonded: Cys-36-Cys-47, Cys-64-Cys-162, and Cys-137-Cys-154.

In terms of processing, all O-linked glycans consist of Gal-GlcNAc-Gal-GalNAc tetrasaccharide core and get elongated (microheterogeneity).

It localises to the secreted. Might act as an inhibitor of spontaneous calcium carbonate precipitation. May be associated with neuronal sprouting in brain, and with brain and pancreas regeneration. The chain is Lithostathine-1-beta (REG1B) from Homo sapiens (Human).